The sequence spans 694 residues: Cyclic nucleotide-gated channel alpha-3 (694 aa).

2 stretches are compositionally biased toward polar residues: residues 1 to 11 (MAKINTQYSHP) and 112 to 123 (SQESNAQANVGS). 2 disordered regions span residues 1-24 (MAKINTQYSHPSRTHLKVKTSDRD) and 109-152 (EVSS…EEKK). At 1–170 (MAKINTQYSH…VDPSSNLYYR (170 aa)) the chain is on the cytoplasmic side. A helical membrane pass occupies residues 171–192 (WLTAIALPVFYNWYLLICRACF). At 193–198 (DELQSE) the chain is on the extracellular side. The chain crosses the membrane as a helical span at residues 199–219 (YLMLWLVLDYSADVLYVLDVL). The Cytoplasmic segment spans residues 220–246 (VRARTGFLEQGLMVSDTNRLWQHYKTT). A helical transmembrane segment spans residues 247 to 266 (TQFKLDVLSLVPTDLAYLKV). Residues 267–270 (GTNY) lie on the Extracellular side of the membrane. A helical membrane pass occupies residues 271–288 (PEVRFNRLLKFSRLFEFF). The Cytoplasmic portion of the chain corresponds to 289–298 (DRTETRTNYP). The ion conduction pathway stretch occupies residues 298 to 406 (PNMFRIGNLV…GNVGSMISNM (109 aa)). The helical transmembrane segment at 299–321 (NMFRIGNLVLYILIIIHWNACIY) threads the bilayer. Residues 322–347 (FAISKFIGFGTDSWVYPNISIPEHGR) lie on the Extracellular side of the membrane. Residue N339 is glycosylated (N-linked (GalNAc...) asparagine). 2 helical membrane-spanning segments follow: residues 348–378 (LSRKYIYSLYWSTLTLTTIGETPPPVKDEEY) and 379–403 (LFVVVDFLVGVLIFATIVGNVGSMI). The tract at residues 365-368 (TIGE) is selectivity filter. Residues 404-694 (SNMNASRAEF…DATKTEDKQQ (291 aa)) lie on the Cytoplasmic side of the membrane. Positions 408 to 485 (ASRAEFQAKI…TLKKVRIFQD (78 aa)) are C-linker. Residues 488 to 608 (AGLLVELVLK…EEKGRQILMK (121 aa)) form a cyclic nucleotide-binding domain region. 3',5'-cyclic GMP is bound by residues G548, E549, S551, R564, T565, and D609. Positions 626-669 (LEEKVEQLGSSLDTLQTRFARLLAEYNATQMKMKQRLSQLESQV) form a coiled coil. Residues 662–694 (LSQLESQVKGGGDKPLADGEVPGDATKTEDKQQ) form a disordered region.

The protein belongs to the cyclic nucleotide-gated cation channel (TC 1.A.1.5) family. CNGA3 subfamily. In terms of assembly, forms heterotetrameric channels composed of CNGA3 and CNGB3 subunits with 3:1 stoichiometry. Prominently expressed in retina.

The protein resides in the cell membrane. The catalysed reaction is Ca(2+)(in) = Ca(2+)(out). It catalyses the reaction Na(+)(in) = Na(+)(out). The enzyme catalyses K(+)(in) = K(+)(out). It carries out the reaction NH4(+)(in) = NH4(+)(out). The catalysed reaction is Rb(+)(in) = Rb(+)(out). It catalyses the reaction Li(+)(in) = Li(+)(out). The enzyme catalyses Cs(+)(in) = Cs(+)(out). With respect to regulation, inhibited by L-cis-diltiazem. In terms of biological role, pore-forming subunit of the cone cyclic nucleotide-gated channel. Mediates cone photoresponses at bright light converting transient changes in intracellular cGMP levels into electrical signals. In the dark, cGMP levels are high and keep the channel open enabling a steady inward current carried by Na(+) and Ca(2+) ions that leads to membrane depolarization and neurotransmitter release from synaptic terminals. Upon photon absorption cGMP levels decline leading to channel closure and membrane hyperpolarization that ultimately slows neurotransmitter release and signals the presence of light, the end point of the phototransduction cascade. Pore-forming subunit of the gustatory cyclic nucleotide-gated channel. In the taste buds, may sense oral extracellular pH and conduct ion currents that modulate the excitability of taste cells. Conducts cGMP- and cAMP-gated ion currents, with permeability for monovalent and divalent cations. This is Cyclic nucleotide-gated channel alpha-3 from Homo sapiens (Human).